We begin with the raw amino-acid sequence, 127 residues long: Large ribosomal subunit protein bL12 (127 aa).

This sequence belongs to the bacterial ribosomal protein bL12 family. In terms of assembly, homodimer. Part of the ribosomal stalk of the 50S ribosomal subunit. Forms a multimeric L10(L12)X complex, where L10 forms an elongated spine to which 2 to 4 L12 dimers bind in a sequential fashion. Binds GTP-bound translation factors.

Functionally, forms part of the ribosomal stalk which helps the ribosome interact with GTP-bound translation factors. Is thus essential for accurate translation. The polypeptide is Large ribosomal subunit protein bL12 (Leptospira interrogans serogroup Icterohaemorrhagiae serovar copenhageni (strain Fiocruz L1-130)).